We begin with the raw amino-acid sequence, 239 residues long: Purine nucleoside phosphorylase DeoD-type (239 aa).

His-5 is an a purine D-ribonucleoside binding site. Gly-21 and Arg-25 together coordinate phosphate. An N6-acetyllysine modification is found at Lys-27. Residues Arg-44 and Arg-88–Ser-91 each bind phosphate. Residues Glu-180 to Glu-182 and Ser-204 to Asp-205 each bind a purine D-ribonucleoside. Asp-205 acts as the Proton donor in catalysis.

It belongs to the PNP/UDP phosphorylase family. Homohexamer; trimer of homodimers.

It catalyses the reaction a purine D-ribonucleoside + phosphate = a purine nucleobase + alpha-D-ribose 1-phosphate. The catalysed reaction is a purine 2'-deoxy-D-ribonucleoside + phosphate = a purine nucleobase + 2-deoxy-alpha-D-ribose 1-phosphate. Catalyzes the reversible phosphorolytic breakdown of the N-glycosidic bond in the beta-(deoxy)ribonucleoside molecules, with the formation of the corresponding free purine bases and pentose-1-phosphate. This Shigella dysenteriae serotype 1 (strain Sd197) protein is Purine nucleoside phosphorylase DeoD-type.